The primary structure comprises 327 residues: Ribosomal RNA large subunit methyltransferase F (327 aa).

The protein belongs to the methyltransferase superfamily. METTL16/RlmF family.

It localises to the cytoplasm. It carries out the reaction adenosine(1618) in 23S rRNA + S-adenosyl-L-methionine = N(6)-methyladenosine(1618) in 23S rRNA + S-adenosyl-L-homocysteine + H(+). Functionally, specifically methylates the adenine in position 1618 of 23S rRNA. The polypeptide is Ribosomal RNA large subunit methyltransferase F (Marinomonas sp. (strain MWYL1)).